The following is a 71-amino-acid chain: DNA-directed RNA polymerase subunit epsilon (71 aa).

Belongs to the RNA polymerase subunit epsilon family. In terms of assembly, RNAP is composed of a core of 2 alpha, a beta and a beta' subunit. The core is associated with a delta subunit, and at least one of epsilon or omega. When a sigma factor is associated with the core the holoenzyme is formed, which can initiate transcription.

The enzyme catalyses RNA(n) + a ribonucleoside 5'-triphosphate = RNA(n+1) + diphosphate. In terms of biological role, a non-essential component of RNA polymerase (RNAP). The protein is DNA-directed RNA polymerase subunit epsilon of Geobacillus kaustophilus (strain HTA426).